Reading from the N-terminus, the 586-residue chain is Phosphatidylinositol-3-phosphatase SAC1-A (586 aa).

Residues 1 to 519 (MANAYERFNL…TPLHVKKDWK (519 aa)) are Cytoplasmic-facing. Positions 121 to 450 (INNVLNTDGF…ANACAKQYAG (330 aa)) constitute an SAC domain. The essential for phosphatidylinositol-4-phosphate phosphatase activity stretch occupies residues 451–586 (TGALKTDFTR…PKLVQKEKMD (136 aa)). Residues 520 to 540 (FLLLPVIMVVAFSMCIICLLM) form a helical membrane-spanning segment. The Lumenal segment spans residues 541 to 547 (AGDTWTE). The chain crosses the membrane as a helical span at residues 548 to 568 (TLAYVLFWGMASALTAAVIVV). Residues 569 to 586 (NGREFVDAPKLVQKEKMD) are Cytoplasmic-facing.

Its subcellular location is the endoplasmic reticulum membrane. The protein resides in the golgi apparatus membrane. It carries out the reaction a 1,2-diacyl-sn-glycero-3-phospho-(1D-myo-inositol-3-phosphate) + H2O = a 1,2-diacyl-sn-glycero-3-phospho-(1D-myo-inositol) + phosphate. The enzyme catalyses a 1,2-diacyl-sn-glycero-3-phospho-(1D-myo-inositol 4-phosphate) + H2O = a 1,2-diacyl-sn-glycero-3-phospho-(1D-myo-inositol) + phosphate. Its function is as follows. Phosphoinositide phosphatase which catalyzes the hydrolysis of phosphatidylinositol 4-phosphate (PtdIns(4)P), phosphatidylinositol 3-phosphate (PtdIns(3)P) and has low activity towards phosphatidylinositol-3,5-bisphosphate (PtdIns(3,5)P2). The polypeptide is Phosphatidylinositol-3-phosphatase SAC1-A (sacm1la) (Danio rerio (Zebrafish)).